Consider the following 1083-residue polypeptide: Probable arabinosyltransferase B (1083 aa).

The next 13 helical transmembrane spans lie at valine 23–leucine 45, phenylalanine 222–tryptophan 239, leucine 252–tryptophan 274, serine 331–serine 350, leucine 357–tryptophan 379, threonine 421–glycine 443, alanine 456–phenylalanine 478, phenylalanine 525–leucine 542, alanine 555–alanine 572, tryptophan 576–valine 598, alanine 611–valine 633, aspartate 648–leucine 670, and phenylalanine 690–glycine 712.

Belongs to the emb family.

The protein resides in the cell membrane. Arabinosyl transferase responsible for the polymerization of arabinose into the arabinan of arabinogalactan. This is Probable arabinosyltransferase B (embB) from Mycobacterium leprae (strain TN).